A 102-amino-acid polypeptide reads, in one-letter code: MIESYSDSFVAMKKFAETYAKRTNTFFCNDLSITQIVLEGLAKHKDEYGAPLCPCRHYDDKSEEVASTYWNCPCVPMRERKECHCMLFLTKDNEFAGSSQTL.

A [4Fe-4S] cluster-binding site is contributed by C53. C55 functions as the Nucleophile in the catalytic mechanism. Cysteines 55 and 85 form a disulfide. [4Fe-4S] cluster-binding residues include C72, C74, and C83.

It belongs to the ferredoxin thioredoxin reductase beta subunit family. As to quaternary structure, heterodimer of subunit A (variable subunit) and subunit B (catalytic subunit). Heterodimeric FTR forms a complex with ferredoxin and thioredoxin. [4Fe-4S] cluster is required as a cofactor.

The protein resides in the plastid. Its subcellular location is the chloroplast. It catalyses the reaction [thioredoxin]-disulfide + 2 reduced [2Fe-2S]-[ferredoxin] + 2 H(+) = [thioredoxin]-dithiol + 2 oxidized [2Fe-2S]-[ferredoxin]. Catalytic subunit of the ferredoxin-thioredoxin reductase (FTR), which catalyzes the two-electron reduction of thioredoxins by the electrons provided by reduced ferredoxin. This is Ferredoxin-thioredoxin reductase, catalytic chain (ftrB) from Guillardia theta (Cryptophyte).